Here is a 289-residue protein sequence, read N- to C-terminus: NFIL3 like protein (289 aa).

The interval 1-27 (MDVGFSGLPDVSQSHSKTLWGARGRGP) is disordered. Residues 42 to 105 (DTVYWEKRRK…GLLPLTGGPR (64 aa)) form the bZIP domain. Residues 48 to 64 (KRRKNNEAAKRSREKRR) are basic motif. Residues 70 to 91 (IEGRLAALMEENALLKGELKAL) are leucine-zipper.

Belongs to the bZIP family. NFIL3 subfamily.

The protein localises to the nucleus. The sequence is that of NFIL3 like protein from Homo sapiens (Human).